A 555-amino-acid polypeptide reads, in one-letter code: Membrane protein insertase YidC (555 aa).

Residues I7–Q24 form a helical membrane-spanning segment. 2 stretches are compositionally biased toward low complexity: residues Q40–A54 and A64–G81. The disordered stretch occupies residues Q40–G81. 5 helical membrane-spanning segments follow: residues L334 to L354, F360 to F380, L430 to L450, L468 to Q488, and V503 to V523.

Belongs to the OXA1/ALB3/YidC family. Type 1 subfamily. In terms of assembly, interacts with the Sec translocase complex via SecD. Specifically interacts with transmembrane segments of nascent integral membrane proteins during membrane integration.

The protein localises to the cell inner membrane. Its function is as follows. Required for the insertion and/or proper folding and/or complex formation of integral membrane proteins into the membrane. Involved in integration of membrane proteins that insert both dependently and independently of the Sec translocase complex, as well as at least some lipoproteins. Aids folding of multispanning membrane proteins. The protein is Membrane protein insertase YidC of Cupriavidus metallidurans (strain ATCC 43123 / DSM 2839 / NBRC 102507 / CH34) (Ralstonia metallidurans).